We begin with the raw amino-acid sequence, 115 residues long: Immunoglobulin kappa chain variable 12-41 (115 aa).

The N-terminal stretch at 1-20 is a signal peptide; that stretch reads MSVLTQVLALLLLWLTGARC. A framework-1 region spans residues 21-43; that stretch reads DIQMTQSPASLSASVGETVTITC. Cys43 and Cys108 are joined by a disulfide. A complementarity-determining-1 region spans residues 44 to 54; that stretch reads RASGNIHNYLA. The segment at 55–69 is framework-2; sequence WYQQKQGKSPQLLVY. Residues 70-76 are complementarity-determining-2; sequence NAKTLAD. Positions 77 to 108 are framework-3; the sequence is GVPSRFSGSGSGTQYSLKINSLQPEDFGSYYC. The interval 109–115 is complementarity-determining-3; it reads QHFWSTP.

The polypeptide is Immunoglobulin kappa chain variable 12-41 (Mus musculus (Mouse)).